The primary structure comprises 103 residues: MSTTIKYEMMILLTEEFNDNELKTWAFNYAKALRKLNASEISVISRGKRDLSYEIANQKRGNFIQISFSSIPKYIENFSSSLKFDSNVLRFLVLNKTNNVKKF.

Belongs to the bacterial ribosomal protein bS6 family.

It localises to the plastid. The protein resides in the chloroplast. Functionally, binds together with bS18 to 16S ribosomal RNA. The sequence is that of Small ribosomal subunit protein bS6c from Thalassiosira pseudonana (Marine diatom).